Here is a 1183-residue protein sequence, read N- to C-terminus: DNA-directed RNA polymerase subunit beta (1183 aa).

This sequence belongs to the RNA polymerase beta chain family. The RNAP catalytic core consists of 2 alpha, 1 beta, 1 beta' and 1 omega subunit. When a sigma factor is associated with the core the holoenzyme is formed, which can initiate transcription.

It carries out the reaction RNA(n) + a ribonucleoside 5'-triphosphate = RNA(n+1) + diphosphate. Its function is as follows. DNA-dependent RNA polymerase catalyzes the transcription of DNA into RNA using the four ribonucleoside triphosphates as substrates. This is DNA-directed RNA polymerase subunit beta from Staphylococcus aureus (strain Mu50 / ATCC 700699).